The following is a 294-amino-acid chain: 4-hydroxy-tetrahydrodipicolinate synthase (294 aa).

Threonine 44 is a pyruvate binding site. Tyrosine 132 serves as the catalytic Proton donor/acceptor. Lysine 160 acts as the Schiff-base intermediate with substrate in catalysis. A pyruvate-binding site is contributed by valine 202.

It belongs to the DapA family. As to quaternary structure, homotetramer; dimer of dimers.

The protein localises to the cytoplasm. It carries out the reaction L-aspartate 4-semialdehyde + pyruvate = (2S,4S)-4-hydroxy-2,3,4,5-tetrahydrodipicolinate + H2O + H(+). It functions in the pathway amino-acid biosynthesis; L-lysine biosynthesis via DAP pathway; (S)-tetrahydrodipicolinate from L-aspartate: step 3/4. Its function is as follows. Catalyzes the condensation of (S)-aspartate-beta-semialdehyde [(S)-ASA] and pyruvate to 4-hydroxy-tetrahydrodipicolinate (HTPA). This Leptospira borgpetersenii serovar Hardjo-bovis (strain L550) protein is 4-hydroxy-tetrahydrodipicolinate synthase.